Here is a 552-residue protein sequence, read N- to C-terminus: HTH-type transcriptional regulator SgrR (552 aa).

The 116-residue stretch at 1–116 (MPSGRLQQQF…LISHLGRSFR (116 aa)) folds into the HTH marR-type domain. A DNA-binding region (H-T-H motif) is located at residues 26 to 49 (LNELADLLNCSRRHMRTLLNTMQA). The interval 163–493 (ELEADIAHHW…RDWQGDAAQW (331 aa)) is solute-binding.

In terms of biological role, activates the small RNA gene sgrS under glucose-phosphate stress conditions as well as yfdZ. Represses its own transcription under both stress and non-stress conditions. Might act as a sensor of the intracellular accumulation of phosphoglucose by binding these molecules in its C-terminal solute-binding domain. The sequence is that of HTH-type transcriptional regulator SgrR from Salmonella typhimurium (strain LT2 / SGSC1412 / ATCC 700720).